Here is a 226-residue protein sequence, read N- to C-terminus: Phosphoenolpyruvate guanylyltransferase (226 aa).

Residues threonine 145, glycine 161, and serine 164 each contribute to the phosphoenolpyruvate site.

Belongs to the CofC family.

It carries out the reaction phosphoenolpyruvate + GTP + H(+) = enolpyruvoyl-2-diphospho-5'-guanosine + diphosphate. It participates in cofactor biosynthesis; coenzyme F420 biosynthesis. In terms of biological role, guanylyltransferase that catalyzes the activation of phosphoenolpyruvate (PEP) as enolpyruvoyl-2-diphospho-5'-guanosine, via the condensation of PEP with GTP. It is involved in the biosynthesis of coenzyme F420, a hydride carrier cofactor. The sequence is that of Phosphoenolpyruvate guanylyltransferase from Nocardia farcinica (strain IFM 10152).